A 420-amino-acid chain; its full sequence is Mitochondrial chaperone BCS1 (420 aa).

Over 1–15 (MTLSDFIGALKDNPY) the chain is Mitochondrial intermembrane. Residues 16–32 (FGAGFGLVGVGTALAVA) traverse the membrane as a helical segment. Residues 33-420 (RKGAQVGMIF…AIKNIAEIKD (388 aa)) are Mitochondrial matrix-facing. Residue 230–237 (GPPGCGKS) participates in ATP binding.

This sequence belongs to the AAA ATPase family. BCS1 subfamily.

The protein resides in the mitochondrion inner membrane. The catalysed reaction is ATP + H2O = ADP + phosphate + H(+). Functionally, chaperone necessary for the incorporation of Rieske iron-sulfur protein uqcrfs1 into the mitochondrial respiratory chain complex III. The polypeptide is Mitochondrial chaperone BCS1 (bcs1l) (Danio rerio (Zebrafish)).